The chain runs to 294 residues: Ribosomal protein L11 methyltransferase (294 aa).

Residues Thr144, Gly165, Asp187, and Asn229 each coordinate S-adenosyl-L-methionine.

The protein belongs to the methyltransferase superfamily. PrmA family.

It localises to the cytoplasm. The catalysed reaction is L-lysyl-[protein] + 3 S-adenosyl-L-methionine = N(6),N(6),N(6)-trimethyl-L-lysyl-[protein] + 3 S-adenosyl-L-homocysteine + 3 H(+). In terms of biological role, methylates ribosomal protein L11. The protein is Ribosomal protein L11 methyltransferase of Pseudomonas paraeruginosa (strain DSM 24068 / PA7) (Pseudomonas aeruginosa (strain PA7)).